We begin with the raw amino-acid sequence, 270 residues long: uncharacterized protein (270 aa).

Disordered stretches follow at residues 35-67 (IKQD…GGNK) and 168-204 (SNNN…DNSN). A compositionally biased stretch (low complexity) spans 39–48 (NNNNNNNNTN). Positions 49–67 (VSLSPSIKSQATSSTGGNK) are enriched in polar residues. A compositionally biased stretch (low complexity) spans 168–191 (SNNNNNNNNNNNNNNNNNNNNNNN).

This is an uncharacterized protein from Dictyostelium discoideum (Social amoeba).